The following is a 1464-amino-acid chain: DNA polymerase III PolC-type (1464 aa).

The region spanning 426 to 582 is the Exonuclease domain; sequence YVVFDVETTG…YDAEATGRLL (157 aa).

Belongs to the DNA polymerase type-C family. PolC subfamily.

It localises to the cytoplasm. It carries out the reaction DNA(n) + a 2'-deoxyribonucleoside 5'-triphosphate = DNA(n+1) + diphosphate. Required for replicative DNA synthesis. This DNA polymerase also exhibits 3' to 5' exonuclease activity. The sequence is that of DNA polymerase III PolC-type from Streptococcus thermophilus (strain ATCC BAA-491 / LMD-9).